The following is a 275-amino-acid chain: Chlorobenzene dihydrodiol dehydrogenase (275 aa).

The active-site Proton acceptor is Tyr155.

It belongs to the short-chain dehydrogenases/reductases (SDR) family.

The enzyme catalyses (1R,2R)-3-chlorocyclohexa-3,5-diene-1,2-diol + NAD(+) = 3-chlorocatechol + NADH + H(+). It participates in aromatic compound metabolism. Its function is as follows. Can transform various dihydrodiols of chlorobenzenes and chlorotoluenes into the respective catechols. This Cupriavidus sp. (strain PS12) protein is Chlorobenzene dihydrodiol dehydrogenase.